The primary structure comprises 299 residues: Probable lipid kinase YegS (299 aa).

In terms of domain architecture, DAGKc spans 2 to 133; the sequence is AEFPASLLIL…IDMAQVNKQT (132 aa). ATP is bound by residues Thr40, 66–72, and Thr95; that span reads GDGTINE. Mg(2+)-binding residues include Leu215, Asp218, and Leu220. Glu271 (proton acceptor) is an active-site residue.

Belongs to the diacylglycerol/lipid kinase family. YegS lipid kinase subfamily. Mg(2+) serves as cofactor. It depends on Ca(2+) as a cofactor.

It localises to the cytoplasm. Its function is as follows. Probably phosphorylates lipids; the in vivo substrate is unknown. The polypeptide is Probable lipid kinase YegS (Escherichia coli O45:K1 (strain S88 / ExPEC)).